Reading from the N-terminus, the 510-residue chain is ETS translocation variant 5 (510 aa).

The interval 132–245 (KPLTPPATPL…PGDSRPSYHR (114 aa)) is disordered. Positions 163–174 (TPGAGPVQGVGP) are enriched in low complexity. The span at 211 to 224 (QYPSEQRFQRQLSE) shows a compositional bias: polar residues. Ser-248 bears the Phosphoserine mark. Residue Lys-350 forms a Glycyl lysine isopeptide (Lys-Gly) (interchain with G-Cter in SUMO2) linkage. A DNA-binding region (ETS) is located at residues 368–448 (LQLWQFLVTL…AGERYVYKFV (81 aa)).

The protein belongs to the ETS family. Interacts (via C-terminal) with ZMYM5 (via N-terminal 120 amino acid region). In terms of tissue distribution, in the brain, expressed predominantly in the cerebral cortex, the amygdala and the hypothalamus. Within the cerebral cortex, there is conspicuously high expression in cortical layers 2, 4 and 6 while expression is almost absent from layers 1, 3 and 5. High expression is also observed in the dorsal and ventral endopiriform claustrum. Strong expression is observed in limited parts of the amygdala including the basolateral amygdaloid nucleus, the bed stria terminalis and the central amygdaloid nucleus. Low to moderate levels are found in the hypothalamus while expression is almost absent in the thalamus. Hypothalamic expression is seen in the dorsomedial hypothalamic nucleus and also the central, dorsomedial and ventrolateral parts of the ventromedial hypothalamic nucleus. Strong expression is also identified in the nigrostriatal tract. In the mesencephalon, expression is restricted to the ventral tegmental area including the parabrachial pigmented nucleus. In the hippocampus, strongly expressed in the pyramidal cell layer. Some expression is also found in the lacunosum moleculare layer. Low levels of expression in the cerebellum, including the granular, molecular and Purkinje cell layers.

Its subcellular location is the nucleus. Its function is as follows. Binds to DNA sequences containing the consensus nucleotide core sequence 5'-GGAA.-3'. This Mus musculus (Mouse) protein is ETS translocation variant 5 (Etv5).